The sequence spans 142 residues: Large ribosomal subunit protein uL13 (142 aa).

Belongs to the universal ribosomal protein uL13 family. In terms of assembly, part of the 50S ribosomal subunit.

This protein is one of the early assembly proteins of the 50S ribosomal subunit, although it is not seen to bind rRNA by itself. It is important during the early stages of 50S assembly. In Histophilus somni (strain 129Pt) (Haemophilus somnus), this protein is Large ribosomal subunit protein uL13.